The sequence spans 212 residues: External core antigen (212 aa).

The N-terminal stretch at 1 to 19 (MQLFHLCLIISCTCPTVQA) is a signal peptide. Positions 25–27 (GWL) are HBEAG. The segment at 165 to 212 (NAPILSTLPETTVVRRRGRSPRRRTPSPRRRRSQSPRRRRSQSRESQC) is disordered. Basic residues predominate over residues 178-205 (VRRRGRSPRRRTPSPRRRRSQSPRRRRS). One copy of the 1; half-length repeat lies at 184-190 (SPRRRTP). The interval 184–206 (SPRRRTPSPRRRRSQSPRRRRSQ) is 3 X 8 AA repeats of S-P-R-R-R-R-S-Q. Residues 184–212 (SPRRRTPSPRRRRSQSPRRRRSQSRESQC) constitute a propeptide that is removed on maturation. 2 consecutive repeat copies span residues 191 to 198 (SPRRRRSQ) and 199 to 206 (SPRRRRSQ).

Belongs to the orthohepadnavirus precore antigen family. Homodimerizes. Post-translationally, phosphorylated. In terms of processing, cleaved by host furin.

Its subcellular location is the secreted. It localises to the host nucleus. Functionally, may regulate immune response to the intracellular capsid in acting as a T-cell tolerogen, by having an immunoregulatory effect which prevents destruction of infected cells by cytotoxic T-cells. This immune regulation may predispose to chronicity during perinatal infections and prevent severe liver injury during adult infections. The sequence is that of External core antigen from Hepatitis B virus genotype D subtype ayw (isolate Italy/CI/1992) (HBV-D).